Reading from the N-terminus, the 169-residue chain is S-ribosylhomocysteine lyase (169 aa).

The Fe cation site is built by H54, H58, and C128.

Belongs to the LuxS family. In terms of assembly, homodimer. It depends on Fe cation as a cofactor.

The catalysed reaction is S-(5-deoxy-D-ribos-5-yl)-L-homocysteine = (S)-4,5-dihydroxypentane-2,3-dione + L-homocysteine. Its function is as follows. Involved in the synthesis of autoinducer 2 (AI-2) which is secreted by bacteria and is used to communicate both the cell density and the metabolic potential of the environment. The regulation of gene expression in response to changes in cell density is called quorum sensing. Catalyzes the transformation of S-ribosylhomocysteine (RHC) to homocysteine (HC) and 4,5-dihydroxy-2,3-pentadione (DPD). The chain is S-ribosylhomocysteine lyase from Aeromonas hydrophila subsp. hydrophila (strain ATCC 7966 / DSM 30187 / BCRC 13018 / CCUG 14551 / JCM 1027 / KCTC 2358 / NCIMB 9240 / NCTC 8049).